Here is a 280-residue protein sequence, read N- to C-terminus: Adenosylcobinamide-GDP ribazoletransferase (280 aa).

The next 6 helical transmembrane spans lie at 4-24, 39-59, 61-81, 108-128, 196-216, and 255-275; these read YLLAFKSGFGFLSTIPVGISM, VVGAVLGLLIGAVAFIGQVIF, GPVLAALLMGFIYYITGFNHL, TIGTGGVSFCILLLLTLYGSI, FLIGFVFGAIVCFLPFGWIGL, and TALIILAVLLQLSLNGYMGGF.

Belongs to the CobS family. Mg(2+) serves as cofactor.

The protein localises to the cell membrane. The catalysed reaction is alpha-ribazole + adenosylcob(III)inamide-GDP = adenosylcob(III)alamin + GMP + H(+). It carries out the reaction alpha-ribazole 5'-phosphate + adenosylcob(III)inamide-GDP = adenosylcob(III)alamin 5'-phosphate + GMP + H(+). Its pathway is cofactor biosynthesis; adenosylcobalamin biosynthesis; adenosylcobalamin from cob(II)yrinate a,c-diamide: step 7/7. Its function is as follows. Joins adenosylcobinamide-GDP and alpha-ribazole to generate adenosylcobalamin (Ado-cobalamin). Also synthesizes adenosylcobalamin 5'-phosphate from adenosylcobinamide-GDP and alpha-ribazole 5'-phosphate. In Methanosarcina barkeri (strain Fusaro / DSM 804), this protein is Adenosylcobinamide-GDP ribazoletransferase.